We begin with the raw amino-acid sequence, 133 residues long: ATP synthase epsilon chain, chloroplastic (133 aa).

It belongs to the ATPase epsilon chain family. As to quaternary structure, F-type ATPases have 2 components, CF(1) - the catalytic core - and CF(0) - the membrane proton channel. CF(1) has five subunits: alpha(3), beta(3), gamma(1), delta(1), epsilon(1). CF(0) has three main subunits: a, b and c.

The protein localises to the plastid. It is found in the chloroplast thylakoid membrane. Functionally, produces ATP from ADP in the presence of a proton gradient across the membrane. This Ipomoea batatas (Sweet potato) protein is ATP synthase epsilon chain, chloroplastic.